The following is a 79-amino-acid chain: Acyl carrier protein (79 aa).

Positions 3–78 (QEILEKVCSI…DAVKFIEEKK (76 aa)) constitute a Carrier domain. The residue at position 38 (S38) is an O-(pantetheine 4'-phosphoryl)serine.

Belongs to the acyl carrier protein (ACP) family. Post-translationally, 4'-phosphopantetheine is transferred from CoA to a specific serine of apo-ACP by AcpS. This modification is essential for activity because fatty acids are bound in thioester linkage to the sulfhydryl of the prosthetic group.

Its subcellular location is the cytoplasm. The protein operates within lipid metabolism; fatty acid biosynthesis. Carrier of the growing fatty acid chain in fatty acid biosynthesis. The protein is Acyl carrier protein of Prochlorococcus marinus (strain MIT 9301).